Here is a 135-residue protein sequence, read N- to C-terminus: MLSPKRTKFRKYHRGRLTGKIYLIDKVVFGNYALQSLEPGWITSRQIEAARRVITRYAKRGGKLWIRIFPDKPVTFRAAETRMGSRKGNVEYWVAIVKPGKILYEVLGISESIAKYSLKIAGYKMPIKTRVIVKI.

It belongs to the universal ribosomal protein uL16 family. In terms of assembly, part of the 50S ribosomal subunit.

The protein localises to the plastid. The protein resides in the chloroplast. The chain is Large ribosomal subunit protein uL16c from Euglena gracilis.